The following is a 509-amino-acid chain: MGLRLLACLFHLPTAVIYGSLSLFVSILHNVFLLYYVDTFVSVYKIDKLSFWIGETVFLIWNSLNDPLFGWLSDRVFLSTQQPGAEISSPEVVLKRLRALSHNGPLFAISFLAFWVAWAHPGLQFLLCLCMYDSFLTMVDLHHNALLADLAVSAKDRTSLNFYCSFFSAIGSLSVFMSYAVWNKEDFFSFRIFCIVLAFCSIVGFTLSTQLLRQRFETDGKAKWDQESTLKELYIEKLSVPQEKRITLVEYLQQLSRHRNFLWFVCMNLIQVFHCHFNSNFFPLFLEHLLSDKISVSTGSFLLGISYIAPHLNNLYFLSLCRRWGVYAVVRGLFFLKLALSVVMLLAGPDQVYLLCIFIASNRVFTEGTCKLLNLVVTDLVDEDLVLNRRKQAASALLFGMVALVTKPGQTFAPLIGTWLLCVYTGYDIFQRNPLSNVVSAQPKLESDTILEPTLRQGCFYLLVFVPITCALLQLLSWTQFSLHGKRLQMVKAQRQGLMQGRAPEIKMI.

Residues 1–10 (MGLRLLACLF) lie on the Extracellular side of the membrane. A helical transmembrane segment spans residues 11–42 (HLPTAVIYGSLSLFVSILHNVFLLYYVDTFVS). Over 43–54 (VYKIDKLSFWIG) the chain is Cytoplasmic. The chain crosses the membrane as a helical span at residues 55-73 (ETVFLIWNSLNDPLFGWLS). At 74 to 98 (DRVFLSTQQPGAEISSPEVVLKRLR) the chain is on the extracellular side. A helical transmembrane segment spans residues 99-116 (ALSHNGPLFAISFLAFWV). Residues 117–124 (AWAHPGLQ) are Cytoplasmic-facing. A helical transmembrane segment spans residues 125–149 (FLLCLCMYDSFLTMVDLHHNALLAD). The Extracellular portion of the chain corresponds to 150–153 (LAVS). The helical transmembrane segment at 154 to 177 (AKDRTSLNFYCSFFSAIGSLSVFM) threads the bilayer. Over 178–189 (SYAVWNKEDFFS) the chain is Cytoplasmic. The chain crosses the membrane as a helical span at residues 190 to 221 (FRIFCIVLAFCSIVGFTLSTQLLRQRFETDGK). Residues 222–259 (AKWDQESTLKELYIEKLSVPQEKRITLVEYLQQLSRHR) are Extracellular-facing. The chain crosses the membrane as a helical span at residues 260–287 (NFLWFVCMNLIQVFHCHFNSNFFPLFLE). Over 288 to 300 (HLLSDKISVSTGS) the chain is Cytoplasmic. Residues 301-320 (FLLGISYIAPHLNNLYFLSL) traverse the membrane as a helical segment. Residues 321-325 (CRRWG) are Extracellular-facing. A helical membrane pass occupies residues 326–345 (VYAVVRGLFFLKLALSVVML). Residues 346 to 353 (LAGPDQVY) lie on the Cytoplasmic side of the membrane. A helical transmembrane segment spans residues 354-388 (LLCIFIASNRVFTEGTCKLLNLVVTDLVDEDLVLN). The Extracellular segment spans residues 389–397 (RRKQAASAL). A helical transmembrane segment spans residues 398–424 (LFGMVALVTKPGQTFAPLIGTWLLCVY). At 425-458 (TGYDIFQRNPLSNVVSAQPKLESDTILEPTLRQG) the chain is on the cytoplasmic side. A helical transmembrane segment spans residues 459–477 (CFYLLVFVPITCALLQLLS). Over 478 to 509 (WTQFSLHGKRLQMVKAQRQGLMQGRAPEIKMI) the chain is Extracellular.

The protein localises to the cell membrane. The protein is Transmembrane protein 180 of Gallus gallus (Chicken).